A 338-amino-acid polypeptide reads, in one-letter code: Histone acetyltransferase SAS2 (338 aa).

Positions Met-1–Lys-15 are enriched in polar residues. A disordered region spans residues Met-1–Ala-31. Positions Leu-16–Ala-31 are enriched in basic residues. In terms of domain architecture, MYST-type HAT spans Leu-45–Asp-338. The C2HC MYST-type zinc-finger motif lies at Leu-100–Gln-126. N6-acetyllysine; by autocatalysis is present on Lys-168. Residues Ile-209–Ile-211 and Gln-216–Leu-222 contribute to the acetyl-CoA site. Glu-242 functions as the Proton donor/acceptor in the catalytic mechanism. Residues Ser-246 and Lys-323 each coordinate acetyl-CoA.

It belongs to the MYST (SAS/MOZ) family. In terms of assembly, interacts with CAC1. Component of the SAS complex, at least composed of SAS2, SAS4 and SAS5. These three proteins constitute the core of the complex and are sufficient to acetylate histones. SAS4 is essential for HAT activity of the complex, while SAS5 is required for maxiaml HAT activity. Autoacetylation at Lys-168 is required for proper function.

Its subcellular location is the cytoplasm. The protein localises to the nucleus. The enzyme catalyses L-lysyl-[protein] + acetyl-CoA = N(6)-acetyl-L-lysyl-[protein] + CoA + H(+). Its function is as follows. Histone acetyltransferase (HAT) subunit of the SAS complex, a multiprotein complex that acetylates 'Lys-16' of histone H4 and 'Lys-14' of histone H3. The SAS complex is however unable to acetylate nucleosomal histones. The complex is involved in transcriptional silencing at telomeres and at HML locus. Also involved in rDNA silencing and G0 control. The chain is Histone acetyltransferase SAS2 (SAS2) from Saccharomyces cerevisiae (strain ATCC 204508 / S288c) (Baker's yeast).